Reading from the N-terminus, the 566-residue chain is Repressible alkaline phosphatase (566 aa).

Positions 1–11 are enriched in polar residues; sequence MMTHTLPSEQT. Residues 1-27 form a disordered region; the sequence is MMTHTLPSEQTRLVPGSDSSSRPKKRR. The Cytoplasmic segment spans residues 1-33; that stretch reads MMTHTLPSEQTRLVPGSDSSSRPKKRRISKRSK. A helical membrane pass occupies residues 34 to 59; it reads IIVSTVVCIGLLLVLVQLAFPSSFAL. Residue Asp-75 coordinates Mg(2+). Asp-75 is a Zn(2+) binding site. Ser-123 functions as the Phosphoserine intermediate in the catalytic mechanism. Ser-123 is subject to Phosphoserine. Mg(2+) contacts are provided by Asp-174 and Thr-176. The N-linked (GlcNAc...) asparagine glycan is linked to Asn-268. Glu-325 provides a ligand contact to Mg(2+). 4 residues coordinate Zn(2+): Asp-330, His-334, Asp-373, and His-374. Asn-401 carries an N-linked (GlcNAc...) asparagine glycan. A Zn(2+)-binding site is contributed by His-484.

It belongs to the alkaline phosphatase family. The cofactor is Mg(2+). Requires Zn(2+) as cofactor.

Its subcellular location is the vacuole membrane. The protein localises to the cytoplasm. It catalyses the reaction a phosphate monoester + H2O = an alcohol + phosphate. It carries out the reaction (2E,6E)-farnesyl diphosphate + H2O = (2E,6E)-farnesol + diphosphate. The enzyme catalyses beta-D-fructose 2,6-bisphosphate + H2O = beta-D-fructose 2-phosphate + phosphate. Phosphatase with broad substrate specificity. A truncated (soluble) version of the protein is responsible for the production of (E,E)-farnesol from (E,E)-farnesyl diphosphate. Acts as a fructose-2,6-bisphosphate 6-phosphatase. The protein is Repressible alkaline phosphatase (PHO8) of Saccharomyces cerevisiae (strain ATCC 204508 / S288c) (Baker's yeast).